Reading from the N-terminus, the 345-residue chain is Trans-enoyl reductase tndF (345 aa).

A disordered region spans residues 1–26; the sequence is MAREHQAAILPQPGGPLSVGMRPTPK. NADP(+) is bound by residues 44-49, 168-171, 191-194, Tyr209, and 244-245; these read CDYYQR, SSSV, SPEH, and LD.

The protein belongs to the zinc-containing alcohol dehydrogenase family.

It functions in the pathway secondary metabolite biosynthesis; terpenoid biosynthesis. In terms of biological role, trans-enoyl reductase; part of the gene cluster that mediates the biosynthesis of talaronoid C, a fusicoccane diterpenoid with an unprecedented tricyclic 5/8/6 ring system. The first step in the pathway is performed by the fusicoccadiene synthase tndC that possesses both prenyl transferase and terpene cyclase activity, converting isopentenyl diphosphate and dimethylallyl diphosphate into geranylgeranyl diphosphate (GGDP) and further converting GGDP into talarodiene, a precursor for talaronoid C. The remaining enzymes from the cluster include the cytochrome P450 monooxygenase tndB, the aldehyde reductase tndE and the alcohol dehydrogenase tndF that are involved in the conversion of talarodiene into talaronoid C. The protein is Trans-enoyl reductase tndF of Aspergillus flavipes.